Here is a 153-residue protein sequence, read N- to C-terminus: UPF0178 protein Sfum_1097 (153 aa).

This sequence belongs to the UPF0178 family.

The chain is UPF0178 protein Sfum_1097 from Syntrophobacter fumaroxidans (strain DSM 10017 / MPOB).